The chain runs to 90 residues: Small ribosomal subunit protein bS16 (90 aa).

This sequence belongs to the bacterial ribosomal protein bS16 family.

This is Small ribosomal subunit protein bS16 from Streptococcus sanguinis (strain SK36).